A 299-amino-acid chain; its full sequence is Non-homologous end-joining factor 1 (299 aa).

A globular head region spans residues 1-135 (MEELEQGLLM…ASPSLVSQHL (135 aa)). Residues 128–170 (PSLVSQHLIRPLMGMSLALQCQVRELATLLHMKDLEIQDYQES) adopt a coiled-coil conformation. 4 positions are modified to phosphoserine; by PRKDC: S132, S203, S245, and S251. Positions 224–288 (QEVQVGQKHQ…GPLQRPQLSK (65 aa)) are C-terminal tail. The span at 255-266 (NQPEQLVSSAPT) shows a compositional bias: polar residues. The segment at 255–299 (NQPEQLVSSAPTLSAPEKESTGTSGPLQRPQLSKVKRKKPRGLFS) is disordered. A Phosphoserine modification is found at S263. T266 bears the Phosphothreonine mark. S287 is modified (phosphoserine). Basic residues predominate over residues 288–299 (KVKRKKPRGLFS). The XLM signature appears at 289–299 (VKRKKPRGLFS).

Belongs to the XRCC4-XLF family. XLF subfamily. Homodimer; mainly exists as a homodimer when not associated with XRCC4. Interacts with XRCC4; the interaction is direct and is mediated via a head-to-head interaction between N-terminal head regions. Component of the core long-range non-homologous end joining (NHEJ) complex (also named DNA-PK complex) composed of PRKDC, LIG4, XRCC4, XRCC6/Ku70, XRCC5/Ku86 and NHEJ1/XLF. Additional component of the NHEJ complex includes PAXX. Following autophosphorylation, PRKDC dissociates from DNA, leading to formation of the short-range NHEJ complex, composed of LIG4, XRCC4, XRCC6/Ku70, XRCC5/Ku86 and NHEJ1/XLF. Interacts with POLL (DNA polymerase lambda); promoting POLL recruitment to double-strand breaks (DSBs) and stimulation of the end-filling activity of POLL. Post-translationally, phosphorylated by PRKDC at the C-terminus in response to DNA damage. Phosphorylations by PRKDC at the C-terminus of XRCC4 and NHEJ1/XLF are highly redundant and regulate ability of the XRCC4-NHEJ1/XLF subcomplex to bridge DNA. Phosphorylation does not prevent interaction with XRCC4 but disrupts ability to bridge DNA and promotes detachment from DNA. Ubiquitously expressed.

It is found in the nucleus. The protein resides in the chromosome. In terms of biological role, DNA repair protein involved in DNA non-homologous end joining (NHEJ); it is required for double-strand break (DSB) repair and V(D)J recombination and is also involved in telomere maintenance. Plays a key role in NHEJ by promoting the ligation of various mismatched and non-cohesive ends. Together with PAXX, collaborates with DNA polymerase lambda (POLL) to promote joining of non-cohesive DNA ends. May act in concert with XRCC5-XRCC6 (Ku) to stimulate XRCC4-mediated joining of blunt ends and several types of mismatched ends that are non-complementary or partially complementary. In some studies, has been shown to associate with XRCC4 to form alternating helical filaments that bridge DNA and act like a bandage, holding together the broken DNA until it is repaired. Alternatively, it has also been shown that rather than forming filaments, a single NHEJ1 dimer interacts through both head domains with XRCC4 to promote the close alignment of DNA ends. The XRCC4-NHEJ1/XLF subcomplex binds to the DNA fragments of a DSB in a highly diffusive manner and robustly bridges two independent DNA molecules, holding the broken DNA fragments in close proximity to one other. The mobility of the bridges ensures that the ends remain accessible for further processing by other repair factors. Binds DNA in a length-dependent manner. This chain is Non-homologous end-joining factor 1, found in Homo sapiens (Human).